We begin with the raw amino-acid sequence, 144 residues long: Large ribosomal subunit protein uL15 (144 aa).

The disordered stretch occupies residues 20–49 (GRGIGSGLGKTGGRGHKGQKSRSGGFHKVG). Gly residues predominate over residues 21–31 (RGIGSGLGKTG).

It belongs to the universal ribosomal protein uL15 family. As to quaternary structure, part of the 50S ribosomal subunit.

Binds to the 23S rRNA. This chain is Large ribosomal subunit protein uL15, found in Neisseria gonorrhoeae (strain ATCC 700825 / FA 1090).